The primary structure comprises 2028 residues: MGSQVLQILRQGVWASLTGGWFFDPHQSTFSNCFHLYVWIFLLIFPFLLYMVLPPSLMVAGVYCLVVAVIFATIKTVNYRLHAMFDQGEIVEKRNSTMGEQEEEAAQGESSLPRDPGVEMTVFRKVSSTPPVRCSSQHSVFGFNQVSELLPRMEDSGPLRDIKELVREQGSNNVIVTSADREMLKLSSQEKLIGDLPQTPPGVVPDPSLPSTDSSERSPMAGDGVPWGGSGVADTPMSPLLKGSLSQELSKSFLTLTRPDRALVRTSSRREQCRGTGGYQPLDRRGSGDPMPQKAGSSDSCFSGTDRETLSSFKSEKTNSTHLDSPPGGHAPEGSDTDPPSEAELPASPDAGVPSDDTLRSFDTVIGAGTPPGQTEPLLVVRPKDLALLRPSKRRPPMRGHSPPGRTPRRPLLEGSGFFEDEDTSEGSELSPASSLRSQRRYSTDSSSSTSCYSPESSQGAAGGPRKRRAPHGAEEGTAVPPKRPYGTQRTPSTASAKTHARVLSMDGAGGDVLRAPLAGSKAELEAQPGMELAAGEPAVLPPEARRGPAANQPGWRGELQEEGAVGGAPEETGQRECTSNVRRAQAIRRRHNAGSNPTPPASVMGSPPSSLQEAQRGRAASHSRALTLPSALHFASSLLLTRAGPNVHEASNFDDTSEGAVHYFYDESGVRRSYTFGLAGGGYENPVSQPGEQAANGAWDRHSHSSSFHSADVPEATGGLNLLQPRPVVLQGMQVRRVPLEIPEEQTLMEEAPPRAQHSYKYWFLPGRWTSVRYERLALLALLDRTRGVMENIFGVGLSSLVAFLGYLLLLKGFFTDIWVFQFCLVIASCQYSLLKSVQPDAASPMHGHNWVIAYSRPVYFCICCLLIWLLDALGTAQPFPPVSLYGLTLFSASFFFCARDVATVFTLCFPFVFLLGLLPQVNTCLMYLLEQIDMHGFGGTAATSPLTAVFSLTRSLLAAALLYGFCLGAIKTPWPEQHVPVLFSVFCGLLVAMSYHLSRQSSDPTVLWSLVRSKLFPELEERSLETARVEPPDPLPEKMRQSVREVLHSDLVMCVVIAVLTFAVSASTVFIALKSVLGFVLYALAGAVGFFTHYLLPQLRKQLPWFCLSQPVLKPLEYSQYEVRGAAQVMWFEKLYAGLQCAEKYLIYPAVVLNALTVDAHTVVSHPDKFCLYCRALLMTVAGLKLLRSAFCCPPQQYLTLAFTVLLFHFDYPRLSQGFLLDYFLMSLLCSKLWDLLYKLRFVLTYIAPWQITWGSAFHAFAQPFAVPHSAMLFLQALLSGLFSTPLNPLLGSAVFIMSYARPLKFWERDYNTKRVDHSNTRLVTQLDRNPGADDNNLNSIFYEHLTRSLQHTLCGDLVLGRWGNYGPGDCFVLASDYLNALVHLIEVGNGLITFQLRGLEFRGTYCQQREVEAITEGVEEDEGCCCCEPGHLPRVLSFNAAFGQRWLAWEVTASKYVLEGYSISDNNAASMLQVFDLRKILVTYYVKSIIYYVSRSPKLETWLNHEGIAAALRPVRALGYADSDPTFSLSVDEDYDLRLSGLSLPSFCAVHLEWIQYCASRRSQPVDQDWNSPLVTLCFGLCVLGRRALGTASHSMSASLEPFLYGLHALFKGDFRITSPRDEWVFADMDLLHRVVAPGVRMALKLHQDHFTSPDEYEEPAALYDAIAANEERLVISHEGDPAWRSAILSNTPSLLALRHVMDDASDEYKIIMLNRRHLSFRVIKVNRECVRGLWAGQQQELVFLRNRNPERGSIQNAKQALRNMINSSCDQPLGYPIYVSPLTTSLAGSHPQLRALWGGPVSLGAIARWLLRSWERLHKGCGAGCNSGGNVDDSDCGGGGGLTSLSNHPPLAHPTPENAAGSSEQPLPPGPSWGPRPSLSGSGDGRPPPLLQWPPPRLPGPPPASPAPTEGPRPSRPSGPALLNSEGPSGKWSLGGRKGLGGPDGEPASGSPKGGTPKSQAPLDLSLSPDVSSEASPARTTQDLPCLDSSIPEGCTPSGAPGDWPVPAEERESPAAQPLLEHQY.

2 helical membrane-spanning segments follow: residues Cys33–Leu53 and Pro54–Ile74. Asn95 is a glycosylation site (N-linked (GlcNAc...) asparagine). The tract at residues Ser96–Pro116 is disordered. Position 127 is a phosphoserine (Ser127). At Thr129 the chain carries Phosphothreonine. Disordered regions lie at residues Ile193 to Pro239 and Leu263 to Arg625. Over residues Gln198–Ser208 the composition is skewed to pro residues. 2 stretches are compositionally biased toward basic and acidic residues: residues Leu263–Cys273 and Thr305–Asn319. An N-linked (GlcNAc...) asparagine glycan is attached at Asn319. Thr370 carries the phosphothreonine modification. Residues Ser392 and Ser431 each carry the phosphoserine modification. Over residues Gly427–Arg437 the composition is skewed to polar residues. Over residues Thr444–Gln459 the composition is skewed to low complexity. Positions Thr488 to Ala497 are enriched in polar residues. A phosphoserine mark is found at Ser505 and Ser521. Transmembrane regions (helical) follow at residues Asn793–Phe815, Ile819–Leu836, Trp852–Leu872, Pro880–Ala900, Val903–Val923, Ser946–Cys968, and His980–Ser1000. Ser1025 is subject to Phosphoserine. The next 4 membrane-spanning stretches (helical) occupy residues Leu1053 to Ile1073, Val1078 to Leu1098, Phe1244 to Ala1264, and Leu1280 to Met1300. The residue at position 1697 (Ser1697) is a Phosphoserine. Residue Asn1770 is glycosylated (N-linked (GlcNAc...) asparagine). Positions Gly1845 to Tyr2028 are disordered. Residues Arg1890–Pro1921 show a composition bias toward pro residues. Residues Ser1909 and Ser1955 each carry the phosphoserine modification. Residues Pro1966–Ser1977 are compositionally biased toward low complexity. The span at Glu1978–Asp1987 shows a compositional bias: polar residues.

This sequence belongs to the pecanex family.

It localises to the membrane. The protein is Pecanex-like protein 3 of Mus musculus (Mouse).